Here is a 479-residue protein sequence, read N- to C-terminus: U3 snoRNP-associated protein-like EMB2271 (479 aa).

A disordered region spans residues 1-73 (MKLEKKKGIG…AHETVGEKRK (73 aa)). A compositionally biased stretch (basic residues) spans 8–17 (GIGAKRRGKK). The span at 18-38 (SSIDHDPFLEEETEKRRKFNY) shows a compositional bias: basic and acidic residues. Positions 39 to 51 (DDDDDIESVESEE) are enriched in acidic residues. A compositionally biased stretch (basic and acidic residues) spans 52-73 (EGKVGEEVEDEFAHETVGEKRK). WD repeat units lie at residues 143–182 (KHQH…SDEY), 204–243 (RHNK…HVQA), 246–285 (GHCG…YIES), 288–326 (GHQS…RLIY), 328–366 (ASES…PVFI), 386–425 (PACS…SAIQ), and 431–471 (PLPG…QNGV).

It belongs to the WD repeat RRP9 family.

The protein localises to the nucleus. It is found in the nucleolus. Functionally, component of a nucleolar small nuclear ribonucleoprotein particle (snoRNP) thought to participate in the processing and modification of pre-ribosomal RNA. Essential for embryogenesis. May function during late embryogenesis. The chain is U3 snoRNP-associated protein-like EMB2271 from Arabidopsis thaliana (Mouse-ear cress).